The chain runs to 708 residues: Elongation factor G 1 (708 aa).

In terms of domain architecture, tr-type G spans 9-295 (AKVRNIGIMA…AVVRYLPTPL (287 aa)). GTP is bound by residues 18–25 (AHIDAGKT), 86–90 (DTPGH), and 140–143 (NKLD).

The protein belongs to the TRAFAC class translation factor GTPase superfamily. Classic translation factor GTPase family. EF-G/EF-2 subfamily.

The protein resides in the cytoplasm. In terms of biological role, catalyzes the GTP-dependent ribosomal translocation step during translation elongation. During this step, the ribosome changes from the pre-translocational (PRE) to the post-translocational (POST) state as the newly formed A-site-bound peptidyl-tRNA and P-site-bound deacylated tRNA move to the P and E sites, respectively. Catalyzes the coordinated movement of the two tRNA molecules, the mRNA and conformational changes in the ribosome. The sequence is that of Elongation factor G 1 (fusA) from Streptomyces coelicolor (strain ATCC BAA-471 / A3(2) / M145).